A 69-amino-acid chain; its full sequence is Putative membrane protein insertion efficiency factor (69 aa).

The protein belongs to the UPF0161 family.

It localises to the cell inner membrane. Its function is as follows. Could be involved in insertion of integral membrane proteins into the membrane. This Aromatoleum aromaticum (strain DSM 19018 / LMG 30748 / EbN1) (Azoarcus sp. (strain EbN1)) protein is Putative membrane protein insertion efficiency factor.